Consider the following 70-residue polypeptide: Putative ankyrin repeat protein RC0502 (70 aa).

The ANK repeat unit spans residues 9–43 (KGRIPIHYATYSKQHEITQILILLQPGSEIDTVDN).

In Rickettsia conorii (strain ATCC VR-613 / Malish 7), this protein is Putative ankyrin repeat protein RC0502.